The sequence spans 814 residues: MMILSIIATVVLLGALFYHRVSLFLSSLILLAWTAALGVAGLWSIWLLVPLAIILVPFNLTPMRKSMISAPVFRGFRKVMPPMSRTEKEAIDAGTTWWEGDLFQGKPDWKKLHNYPQPQLTAEEQAFLDGPVEEACRMANDFQITHELADLPPELWAYLKEHRFFAMIIKKEYGGLEFSAYAQSRVLQKLSGVSGILAITVGVPNSLGPGELLQHYGTEEQKNHYLPRLARGQEIPCFALTSPEAGSDAGAIPDTGVVCMGEWQGQQVLGMRLTWNKRYITLAPIATVLGLAFKLSDPDRLLGGEEELGITCALIPTSTPGVEIGRRHFPLNVPFQNGPTRGNDIFVPIDYIIGGPKMAGQGWRMLVECLSVGRGITLPSNSTGGVKSVALATGAYAHIRRQFKISIGKMEGIEEPLARIAGNAYVMDAAASLITYGIMLGEKPAVLSAIVKYHCTHRGQQSIIDAMDITGGKGIMLGESNFLARAYQGAPIAITVEGANILTRSMMIFGQGAIRCHPYVLEEMAAAQNNDVNAFDKLLFKHIGHVGSNTVRSFWLGLTRGLTSHTPTGDATKRYYQHLNRLSANLALLSDVSMAVLGGSLKRRERISARLGDVLSQLYLASAVLKRYDDEGRHEADLPLVHWGVQDALYRAEQAMDDLLQNFPNRVVAGLLTAMIFPTGRHYLAPSDKLDHAVAKILQVPNATRSRIGRGQYLTPAEHNPVGLLEEALRDVIAADPIHQRICKELGKNLPFTRLDELARNALAKGLIDKDEAAILAKAEESRLRSINVDDFEPEALATKPVKLPEKVRKVEAA.

Catalysis depends on Glu-497, which acts as the Proton acceptor.

This sequence belongs to the acyl-CoA dehydrogenase family. Requires FAD as cofactor.

It carries out the reaction a medium-chain 2,3-saturated fatty acyl-CoA + oxidized [electron-transfer flavoprotein] + H(+) = a medium-chain (2E)-enoyl-CoA + reduced [electron-transfer flavoprotein]. The enzyme catalyses a long-chain 2,3-saturated fatty acyl-CoA + oxidized [electron-transfer flavoprotein] + H(+) = a long-chain (2E)-enoyl-CoA + reduced [electron-transfer flavoprotein]. It participates in lipid metabolism; fatty acid beta-oxidation. Functionally, catalyzes the dehydrogenation of acyl-coenzymes A (acyl-CoAs) to 2-enoyl-CoAs, the first step of the beta-oxidation cycle of fatty acid degradation. Is required for S.typhimurium to utilize medium- and long-chain fatty acids as sole carbon sources for growth. Is needed for bacterial survival during carbone-source starvation. This is Acyl-coenzyme A dehydrogenase (fadE) from Salmonella typhimurium (strain LT2 / SGSC1412 / ATCC 700720).